We begin with the raw amino-acid sequence, 138 residues long: Small ribosomal subunit protein uS17 (138 aa).

2 stretches are compositionally biased toward basic and acidic residues: residues 1–18 (MSEE…RAEA) and 43–55 (AFDR…QKDT). A disordered region spans residues 1–62 (MSEEERNRGA…KDTRRGRRKE (62 aa)).

The protein belongs to the universal ribosomal protein uS17 family. In terms of assembly, part of the 30S ribosomal subunit.

Functionally, one of the primary rRNA binding proteins, it binds specifically to the 5'-end of 16S ribosomal RNA. The chain is Small ribosomal subunit protein uS17 from Rubrobacter xylanophilus (strain DSM 9941 / JCM 11954 / NBRC 16129 / PRD-1).